A 343-amino-acid polypeptide reads, in one-letter code: Endoglucanase C (343 aa).

E140 functions as the Proton donor in the catalytic mechanism. Catalysis depends on E280, which acts as the Nucleophile.

Belongs to the glycosyl hydrolase 5 (cellulase A) family.

It carries out the reaction Endohydrolysis of (1-&gt;4)-beta-D-glucosidic linkages in cellulose, lichenin and cereal beta-D-glucans.. Its pathway is glycan metabolism; cellulose degradation. In terms of biological role, this enzyme catalyzes the endohydrolysis of 1,4-beta-glucosidic linkages in cellulose, lichenin and cereal beta-D-glucans. This Acetivibrio thermocellus (Hungateiclostridium thermocellum) protein is Endoglucanase C (celC).